We begin with the raw amino-acid sequence, 993 residues long: DNA mismatch repair protein msh3 (993 aa).

The tract at residues 97–211 (TKQKSVFTPL…RRVARVLTKG (115 aa)) is mispair-binding domain. Position 759-766 (759-766 (GPNMGGKS)) interacts with ATP.

It belongs to the DNA mismatch repair MutS family. MSH3 subfamily. As to quaternary structure, heterodimer consisting of msh2-msh3 (MutS beta). Forms a ternary complex with MutL alpha (mlh1-pms1).

It localises to the nucleus. In terms of biological role, component of the post-replicative DNA mismatch repair system (MMR). Heterodimerizes with msh2 to form MutS beta, which binds to DNA mismatches thereby initiating DNA repair. Msh3 provides substrate-binding and substrate specificity to the complex. When bound, the MutS beta heterodimer bends the DNA helix and shields approximately 20 base pairs. Acts mainly to repair insertion-deletion loops (IDLs) from 2 to 13 nucleotides in size, but can also repair base-base and single insertion-deletion mismatches that occur during replication. After mismatch binding, forms a ternary complex with the MutL alpha heterodimer, which is thought to be responsible for directing the downstream MMR events, including strand discrimination, excision, and resynthesis. ATP binding and hydrolysis play a pivotal role in mismatch repair functions. Involved in termination of copy-synthesis during mating-type switching. The protein is DNA mismatch repair protein msh3 (msh3) of Schizosaccharomyces pombe (strain 972 / ATCC 24843) (Fission yeast).